Consider the following 360-residue polypeptide: Dual-specificity RNA methyltransferase RlmN (360 aa).

The Proton acceptor role is filled by E93. Residues E99 to D326 form the Radical SAM core domain. Residues C106 and C331 are joined by a disulfide bond. The [4Fe-4S] cluster site is built by C113, C117, and C120. S-adenosyl-L-methionine-binding positions include G158 to E159, S190, S212 to N214, and N288. C331 serves as the catalytic S-methylcysteine intermediate.

The protein belongs to the radical SAM superfamily. RlmN family. [4Fe-4S] cluster is required as a cofactor.

It localises to the cytoplasm. It catalyses the reaction adenosine(2503) in 23S rRNA + 2 reduced [2Fe-2S]-[ferredoxin] + 2 S-adenosyl-L-methionine = 2-methyladenosine(2503) in 23S rRNA + 5'-deoxyadenosine + L-methionine + 2 oxidized [2Fe-2S]-[ferredoxin] + S-adenosyl-L-homocysteine. The catalysed reaction is adenosine(37) in tRNA + 2 reduced [2Fe-2S]-[ferredoxin] + 2 S-adenosyl-L-methionine = 2-methyladenosine(37) in tRNA + 5'-deoxyadenosine + L-methionine + 2 oxidized [2Fe-2S]-[ferredoxin] + S-adenosyl-L-homocysteine. Its function is as follows. Specifically methylates position 2 of adenine 2503 in 23S rRNA and position 2 of adenine 37 in tRNAs. m2A2503 modification seems to play a crucial role in the proofreading step occurring at the peptidyl transferase center and thus would serve to optimize ribosomal fidelity. The polypeptide is Dual-specificity RNA methyltransferase RlmN (Geobacter sulfurreducens (strain ATCC 51573 / DSM 12127 / PCA)).